We begin with the raw amino-acid sequence, 144 residues long: Large ribosomal subunit protein uL13 (144 aa).

It belongs to the universal ribosomal protein uL13 family. As to quaternary structure, part of the 50S ribosomal subunit.

This protein is one of the early assembly proteins of the 50S ribosomal subunit, although it is not seen to bind rRNA by itself. It is important during the early stages of 50S assembly. The sequence is that of Large ribosomal subunit protein uL13 from Moorella thermoacetica (strain ATCC 39073 / JCM 9320).